A 550-amino-acid chain; its full sequence is Mitochondrial distribution and morphology protein 12 (550 aa).

Positions 1–550 (MSIELNWETL…VYPSFWTFLV (550 aa)) constitute an SMP-LTD domain. Disordered regions lie at residues 62-168 (ITDP…PQDL), 218-356 (PPQW…TKYR), and 474-493 (TLASPAGAAPGSDEKAGGNT). Residues 69-90 (FYEEDPDVDYDDEDEDVEETHD) are compositionally biased toward acidic residues. Low complexity predominate over residues 125–140 (VASSSSSSVGRGSAPR). Composition is skewed to polar residues over residues 148–157 (PTKSNININT), 251–269 (PSHSRTSSTVSNADLQTAS), 278–289 (TPTSFLRSGQQT), and 296–323 (VSTLAPTSVGTSRPPTRDLTTTMSTAQE).

This sequence belongs to the MDM12 family. In terms of assembly, component of the ER-mitochondria encounter structure (ERMES) or MDM complex, composed of MMM1, MDM10, MDM12 and MDM34. An MMM1 homodimer associates with one molecule of MDM12 on each side in a pairwise head-to-tail manner, and the SMP-LTD domains of MMM1 and MDM12 generate a continuous hydrophobic tunnel for phospholipid trafficking.

Its subcellular location is the mitochondrion outer membrane. The protein localises to the endoplasmic reticulum membrane. Component of the ERMES/MDM complex, which serves as a molecular tether to connect the endoplasmic reticulum (ER) and mitochondria. Components of this complex are involved in the control of mitochondrial shape and protein biogenesis, and function in nonvesicular lipid trafficking between the ER and mitochondria. MDM12 is required for the interaction of the ER-resident membrane protein MMM1 and the outer mitochondrial membrane-resident beta-barrel protein MDM10. The MDM12-MMM1 subcomplex functions in the major beta-barrel assembly pathway that is responsible for biogenesis of all mitochondrial outer membrane beta-barrel proteins, and acts in a late step after the SAM complex. The MDM10-MDM12-MMM1 subcomplex further acts in the TOM40-specific pathway after the action of the MDM12-MMM1 complex. Essential for establishing and maintaining the structure of mitochondria and maintenance of mtDNA nucleoids. This is Mitochondrial distribution and morphology protein 12 from Pyricularia oryzae (strain 70-15 / ATCC MYA-4617 / FGSC 8958) (Rice blast fungus).